Here is an 809-residue protein sequence, read N- to C-terminus: Histone H2A deubiquitinase MYSM1 (809 aa).

The SANT domain maps to 33 to 78 (GYEPNWMFDHGQEIYGRSWTSISQFVQTRTPLQVKNYARHFFKTKV). Disordered stretches follow at residues 113-140 (PAQP…VTED) and 320-378 (DATD…KETY). 2 stretches are compositionally biased toward basic and acidic residues: residues 335–345 (TLDHPEDRSKP) and 363–378 (TDGR…KETY). The 99-residue stretch at 410–508 (FKKPTEEVVL…FGCEEANRGE (99 aa)) folds into the SWIRM domain. Residues 592 to 719 (VKIHATALVT…YSSTRISPLS (128 aa)) form the MPN domain. Zn(2+)-binding residues include histidine 671, histidine 673, and aspartate 684. The short motif at 671–684 (HSHPTFAPNPSVRD) is the JAMM motif element.

This sequence belongs to the peptidase M67A family. MYSM1 subfamily.

It is found in the nucleus. Its function is as follows. Metalloprotease that specifically deubiquitinates monoubiquitinated histone H2A, a specific tag for epigenetic transcriptional repression, thereby acting as a coactivator. Preferentially deubiquitinates monoubiquitinated H2A in hyperacetylated nucleosomes. Deubiquitination of histone H2A leads to facilitate the phosphorylation and dissociation of histone H1 from the nucleosome. Acts as a coactivator by participating in the initiation and elongation steps of androgen receptor (AR)-induced gene activation. In Branchiostoma floridae (Florida lancelet), this protein is Histone H2A deubiquitinase MYSM1 (MYSM1).